The following is a 270-amino-acid chain: NADPH-dependent 7-cyano-7-deazaguanine reductase (270 aa).

Residue 79–81 (IES) participates in substrate binding. Position 81-82 (81-82 (SK)) interacts with NADPH. The active-site Thioimide intermediate is the Cys-177. Asp-184 (proton donor) is an active-site residue. Substrate is bound at residue 216 to 217 (HE). An NADPH-binding site is contributed by 245 to 246 (RG).

It belongs to the GTP cyclohydrolase I family. QueF type 2 subfamily. In terms of assembly, homodimer.

It localises to the cytoplasm. The enzyme catalyses 7-aminomethyl-7-carbaguanine + 2 NADP(+) = 7-cyano-7-deazaguanine + 2 NADPH + 3 H(+). It participates in tRNA modification; tRNA-queuosine biosynthesis. In terms of biological role, catalyzes the NADPH-dependent reduction of 7-cyano-7-deazaguanine (preQ0) to 7-aminomethyl-7-deazaguanine (preQ1). This is NADPH-dependent 7-cyano-7-deazaguanine reductase from Acinetobacter baumannii (strain ACICU).